The sequence spans 72 residues: Large ribosomal subunit protein uL29 (72 aa).

Belongs to the universal ribosomal protein uL29 family.

The protein is Large ribosomal subunit protein uL29 of Rhodopirellula baltica (strain DSM 10527 / NCIMB 13988 / SH1).